A 70-amino-acid polypeptide reads, in one-letter code: DNA-directed RNA polymerase subunit omega (70 aa).

Belongs to the RNA polymerase subunit omega family. The RNAP catalytic core consists of 2 alpha, 1 beta, 1 beta' and 1 omega subunit. When a sigma factor is associated with the core the holoenzyme is formed, which can initiate transcription.

It catalyses the reaction RNA(n) + a ribonucleoside 5'-triphosphate = RNA(n+1) + diphosphate. Functionally, promotes RNA polymerase assembly. Latches the N- and C-terminal regions of the beta' subunit thereby facilitating its interaction with the beta and alpha subunits. This is DNA-directed RNA polymerase subunit omega from Clostridium perfringens (strain ATCC 13124 / DSM 756 / JCM 1290 / NCIMB 6125 / NCTC 8237 / Type A).